We begin with the raw amino-acid sequence, 125 residues long: MIVGIGTDLAEVARFEQLLARHGQRVARRMLAAAELDEFARAADPARFLAKRFAAKEAFAKAAGTGVRAPVLLPAIAVTHDELGKPAFACSAVLHDWLTARGVQRMHVSISDERTHCLAFVVFEG.

Residues Asp-8 and Glu-57 each contribute to the Mg(2+) site.

This sequence belongs to the P-Pant transferase superfamily. AcpS family. It depends on Mg(2+) as a cofactor.

It localises to the cytoplasm. The enzyme catalyses apo-[ACP] + CoA = holo-[ACP] + adenosine 3',5'-bisphosphate + H(+). In terms of biological role, transfers the 4'-phosphopantetheine moiety from coenzyme A to a Ser of acyl-carrier-protein. This Laribacter hongkongensis (strain HLHK9) protein is Holo-[acyl-carrier-protein] synthase.